The primary structure comprises 399 residues: Forkhead box protein A4 (399 aa).

Positions Lys-119 to Lys-213 form a DNA-binding region, fork-head. Residues Arg-219–Asp-234 show a composition bias toward basic and acidic residues. Residues Arg-219–Ala-290 are disordered. Over residues Ser-267–Gly-277 the composition is skewed to polar residues.

Its subcellular location is the nucleus. Functionally, transcriptional repressor involved in embryonic nervous system development. Plays a role in the induction and patterning of the anterior-posterior neural axis. Involved in the establishment of floor plate differentiation from neural plate cells during gastrulation. Binds the anf1 promoter sequence to restrict expression of anf1 to the anterior of the neural plate, thereby patterning the forebrain. Can bind to the HNF-3-alpha DNA target sequence. Cooperates with t/bra in a dose-dependent manner to specify dorsal mesoderm formation, including notochord. May be involved in the dorso-ventral patterning of the mesoderm. Binds to DNA via the target sequence 5'-[GA]TAAA[TC]A-3', with 5'-GTAAATA-3' being the preferred binding site. In Xenopus tropicalis (Western clawed frog), this protein is Forkhead box protein A4.